The primary structure comprises 151 residues: MWRWSSPPSRQKLSRDTSSNKEFSIKFYSVPQSKNLFILPYTTLYMQRYIYPVDLTEVEDELNIIVEKLKTSKAEAIREAIRHYAEELRGLEVVELRDVPKEQAKEEVKEFIKGKERVWADEIADALRLDLSLVNDILMELWSEGYVEPED.

This is an uncharacterized protein from Archaeoglobus fulgidus (strain ATCC 49558 / DSM 4304 / JCM 9628 / NBRC 100126 / VC-16).